The primary structure comprises 307 residues: Oxygen-dependent coproporphyrinogen-III oxidase (307 aa).

Position 94 (S94) interacts with substrate. Residues H98 and H108 each coordinate a divalent metal cation. Residue H108 is the Proton donor of the active site. Residue N110–R112 coordinates substrate. A divalent metal cation is bound by residues H147 and H177. The important for dimerization stretch occupies residues Y242 to Q277. G260 to R262 contacts substrate.

It belongs to the aerobic coproporphyrinogen-III oxidase family. In terms of assembly, homodimer. Requires a divalent metal cation as cofactor.

The protein resides in the cytoplasm. It carries out the reaction coproporphyrinogen III + O2 + 2 H(+) = protoporphyrinogen IX + 2 CO2 + 2 H2O. Its pathway is porphyrin-containing compound metabolism; protoporphyrin-IX biosynthesis; protoporphyrinogen-IX from coproporphyrinogen-III (O2 route): step 1/1. Involved in the heme biosynthesis. Catalyzes the aerobic oxidative decarboxylation of propionate groups of rings A and B of coproporphyrinogen-III to yield the vinyl groups in protoporphyrinogen-IX. In Chromohalobacter salexigens (strain ATCC BAA-138 / DSM 3043 / CIP 106854 / NCIMB 13768 / 1H11), this protein is Oxygen-dependent coproporphyrinogen-III oxidase.